A 1449-amino-acid polypeptide reads, in one-letter code: ABC transporter G family member 21 (1449 aa).

The span at 1-10 (MEEYELREIA) shows a compositional bias: basic and acidic residues. A disordered region spans residues 1 to 49 (MEEYELREIALQEGGSNLDINTPPNYDNPVGDGSSPPDSPDIQKSENQF). A compositionally biased stretch (polar residues) spans 14 to 25 (GGSNLDINTPPN). The ABC transporter 1 domain occupies 130 to 383 (ISFFNLFKPS…FIDLGFDCEP (254 aa)). The ABC transmembrane type-2 1 domain occupies 488–731 (WGDKFSLISR…ILSVEGKDYL (244 aa)). The next 5 helical transmembrane spans lie at 519 to 539 (IPGL…NAFL), 577 to 597 (IPLT…MFGL), 602 to 622 (GKFF…TNLF), 634 to 654 (ISQN…GYTI), and 747 to 767 (FITY…MEYF). The region spanning 818–1062 (FTWQNINYTV…LTSYFERYGV (245 aa)) is the ABC transporter 2 domain. An ATP-binding site is contributed by 854–861 (GSSGAGKT). In terms of domain architecture, ABC transmembrane type-2 2 spans 1152-1386 (FYTYGSFIQS…PISEPLTGYV (235 aa)). 6 helical membrane passes run 1155–1175 (YGSF…FWSL), 1188–1208 (FIFE…PQFI), 1228–1248 (FAIS…TIFF), 1266–1286 (FYFW…GQAV), 1296–1316 (AHTL…VMVI), and 1423–1443 (LALI…FVYI).

This sequence belongs to the ABC transporter superfamily. ABCG family. PDR (TC 3.A.1.205) subfamily.

It localises to the membrane. The protein is ABC transporter G family member 21 (abcG21) of Dictyostelium discoideum (Social amoeba).